A 366-amino-acid polypeptide reads, in one-letter code: Polyprenyl transferase AOL_s00215g276 (366 aa).

The interval Met-1–Ser-22 is disordered. A run of 7 helical transmembrane segments spans residues Leu-53 to Ala-73, Phe-85 to Thr-105, Ile-137 to Phe-157, Ala-160 to Val-180, Leu-185 to Asn-205, Ala-212 to Thr-232, and His-253 to Ala-273. N-linked (GlcNAc...) asparagine glycosylation occurs at Asn-277. The next 2 membrane-spanning stretches (helical) occupy residues Leu-281–Leu-301 and Val-312–Trp-332. Asn-352 carries an N-linked (GlcNAc...) asparagine glycan.

This sequence belongs to the UbiA prenyltransferase family. Mg(2+) is required as a cofactor.

The protein localises to the membrane. Its pathway is secondary metabolite biosynthesis; terpenoid biosynthesis. In terms of biological role, polyprenyl transferase; part of the gene cluster that mediates the biosynthesis of sesquiterpenyl epoxy-cyclohexenoids (SECs) such as anthrobotrisins and arthrosporols, metabolites that possess a novel hybrid carbon skeleton consisting of a polyketide-derived epoxycyclohexenol combined with a terpenoid-derived monocyclic sesquiterpenol substructure (PKS-PTS hybrid). The SEC pathway plays an important role for fungal soil colonization via decreasing fungal nematode-capturing ability. Within the pathway, the polyprenyl transferase catalyzes the farnesylation of toluquinol to yield farnesyl hydroquinone, the first hybrid precursor for biosynthesis of SECs, and farnesyl quinone (34) might be the key precursor for the epoxy ring formation. The pathway begins with the biosynthesis of 6-methylsalicylic acid (6-MSA), the first precursor of the polyketide-derived epoxycyclohexenol in arthrosporols, by the polyketide synthase (PKS) AOL_s00215g283 via condensation of 1 acetate and 3 malonate units. The 6-methylsalicylic acid decarboxylase AOL_s00215g281 then catalyzes the decarboxylation of 6-methylsalicylic acid to yield m-cresol. The cytochrome P450 monooxygenase AOL_s00215g282 further oxidizes m-cresol to yield toluquinol. With the assistance of the oxidoreductase AOL_s00215g277, the polyprenyl transferase AOL_s00215g276 catalyzes the farnesylation of toluquinol to produce farnesyl hydroquinone, the hybrid precursor for biosynthesis of SECs. Farnesyl hydroquinone undergoes epoxidation and then subsequent dehydrogenation to form farnesyl epoxy-quinone, the first and simplest SEC. The cytochrome P450 monooxygenase AOL_s00215g278 and the FAD-dependent monooxygenase AOL_s00215g279 might be involved in the oxygenation of the phenol moiety, most likely in the epoxy formation. The cytochrome P450 monooxygenases AOL_s00215g274 and AOL_s00215g280 are involved in specific regional ketone reductions at respectively C-4 and C-1 of farnesyl epoxy-quinone PubMed:33823587. This Arthrobotrys oligospora (strain ATCC 24927 / CBS 115.81 / DSM 1491) (Nematode-trapping fungus) protein is Polyprenyl transferase AOL_s00215g276.